The chain runs to 119 residues: Hemerythrin subunit B (119 aa).

Fe cation-binding residues include His-26, His-55, Glu-59, His-74, His-78, His-107, and Asp-112.

This sequence belongs to the hemerythrin family.

Hemerythrin is a respiratory protein in blood cells of certain marine worms. The oxygen-binding site in each chain contains two iron atoms. The polypeptide is Hemerythrin subunit B (Sipunculus nudus (Sipunculan worm)).